A 535-amino-acid chain; its full sequence is Succinate-semialdehyde dehydrogenase, mitochondrial (535 aa).

A mitochondrion-targeting transit peptide spans 1 to 47 (MATCIWLRSCGARRLGWTFPGCRLRPRAGGLVPASGPAPGPAQLRCY). Position 126 is an N6-acetyllysine; alternate (Lys-126). At Lys-126 the chain carries N6-succinyllysine; alternate. Lys-135 and Lys-184 each carry N6-succinyllysine. Residues Arg-213 and 228 to 231 (KPAE) each bind NAD(+). Arg-213 is a substrate binding site. Lys-265 carries the N6-acetyllysine; alternate modification. Lys-265 is modified (N6-succinyllysine; alternate). 284-289 (GSTTTG) contacts NAD(+). The Proton acceptor role is filled by Glu-306. Substrate is bound at residue Arg-334. Cys-340 (nucleophile) is an active-site residue. Cys-340 and Cys-342 are oxidised to a cystine. Residue Lys-365 is modified to N6-acetyllysine. Lys-402 is subject to N6-succinyllysine. Lys-411 is modified (N6-acetyllysine). Ser-498 lines the substrate pocket. At Ser-499 the chain carries Phosphoserine.

It belongs to the aldehyde dehydrogenase family. Homotetramer.

The protein resides in the mitochondrion. It carries out the reaction succinate semialdehyde + NAD(+) + H2O = succinate + NADH + 2 H(+). It functions in the pathway amino-acid degradation; 4-aminobutanoate degradation. With respect to regulation, redox-regulated. Inhibited under oxydizing conditions. Catalyzes one step in the degradation of the inhibitory neurotransmitter gamma-aminobutyric acid (GABA). In Pan paniscus (Pygmy chimpanzee), this protein is Succinate-semialdehyde dehydrogenase, mitochondrial (ALDH5A1).